A 382-amino-acid polypeptide reads, in one-letter code: Alkanesulfonate monooxygenase (382 aa).

Belongs to the SsuD family. As to quaternary structure, homotetramer.

The enzyme catalyses an alkanesulfonate + FMNH2 + O2 = an aldehyde + FMN + sulfite + H2O + 2 H(+). Catalyzes the desulfonation of aliphatic sulfonates. This chain is Alkanesulfonate monooxygenase, found in Yersinia pseudotuberculosis serotype O:1b (strain IP 31758).